Here is a 344-residue protein sequence, read N- to C-terminus: Phenylalanine--tRNA ligase alpha subunit (344 aa).

Glutamate 269 is a Mg(2+) binding site.

It belongs to the class-II aminoacyl-tRNA synthetase family. Phe-tRNA synthetase alpha subunit type 1 subfamily. Tetramer of two alpha and two beta subunits. It depends on Mg(2+) as a cofactor.

It is found in the cytoplasm. It carries out the reaction tRNA(Phe) + L-phenylalanine + ATP = L-phenylalanyl-tRNA(Phe) + AMP + diphosphate + H(+). The polypeptide is Phenylalanine--tRNA ligase alpha subunit (Ralstonia nicotianae (strain ATCC BAA-1114 / GMI1000) (Ralstonia solanacearum)).